Consider the following 238-residue polypeptide: ATP synthase subunit a (238 aa).

4 helical membrane passes run 17 to 37 (LSNILMITVTCVIVLLIAIIC), 80 to 100 (ITLLMFIFVANMLGLPFQIAI), 112 to 132 (DPIVTLTLAIMVLGLTHYYGI), and 194 to 214 (IFVGVLAIIPALLWQGFSIFI).

It belongs to the ATPase A chain family. As to quaternary structure, F-type ATPases have 2 components, CF(1) - the catalytic core - and CF(0) - the membrane proton channel. CF(1) has five subunits: alpha(3), beta(3), gamma(1), delta(1), epsilon(1). CF(0) has three main subunits: a(1), b(2) and c(9-12). The alpha and beta chains form an alternating ring which encloses part of the gamma chain. CF(1) is attached to CF(0) by a central stalk formed by the gamma and epsilon chains, while a peripheral stalk is formed by the delta and b chains.

The protein localises to the cell membrane. Functionally, key component of the proton channel; it plays a direct role in the translocation of protons across the membrane. This Listeria innocua serovar 6a (strain ATCC BAA-680 / CLIP 11262) protein is ATP synthase subunit a.